Here is a 55-residue protein sequence, read N- to C-terminus: Large ribosomal subunit protein bL32 (55 aa).

Residues 1-19 show a composition bias toward basic residues; it reads MAVPKRRMSRANTHTRRSQ. The segment at 1-21 is disordered; sequence MAVPKRRMSRANTHTRRSQWK.

Belongs to the bacterial ribosomal protein bL32 family.

This is Large ribosomal subunit protein bL32 from Corynebacterium kroppenstedtii (strain DSM 44385 / JCM 11950 / CIP 105744 / CCUG 35717).